Reading from the N-terminus, the 682-residue chain is Two-component system protein A (682 aa).

Residues serine 11–serine 41 are disordered. The segment covering histidine 21–glutamine 32 has biased composition (basic and acidic residues). PAS domains lie at leucine 45 to tyrosine 105 and methionine 166 to glycine 239. A PAC domain is found at isoleucine 241–alanine 292. Residues asparagine 307–glycine 530 form the Histidine kinase domain. Histidine 310 carries the phosphohistidine; by autocatalysis modification. The Response regulatory domain occupies histidine 563 to phenylalanine 680. A 4-aspartylphosphate modification is found at aspartate 615.

In terms of processing, activation probably requires a transfer of a phosphate group between a His in the histidine kinase domain and an Asp of the response regulatory domain.

Its subcellular location is the cytoplasm. It carries out the reaction ATP + protein L-histidine = ADP + protein N-phospho-L-histidine.. In terms of biological role, may be part of a two-component regulatory system required for formation of conidia on certain growth media. This Emericella nidulans (strain FGSC A4 / ATCC 38163 / CBS 112.46 / NRRL 194 / M139) (Aspergillus nidulans) protein is Two-component system protein A.